Consider the following 157-residue polypeptide: Protein Smg homolog (157 aa).

This sequence belongs to the Smg family.

The sequence is that of Protein Smg homolog from Alkalilimnicola ehrlichii (strain ATCC BAA-1101 / DSM 17681 / MLHE-1).